We begin with the raw amino-acid sequence, 294 residues long: MDQFRNIGIVGRMGSVKVVESLRQLKQYLTANNYHVIIEEDTSTMIPGHGLQVASKKLLGEICDLVIVVGGDGSLLGAARELAKSKIPILGVNRGRLGFLTDISPSDLEERLARVLEGDYIEESRFLLDGHVERNGQPLGYGSALNDVVLHPGKSTRMIGFDLFIDGHFVYSQRSDGLIVATPTGSTAYSLSAGGPIMHPKLDAVVLVPMFPHTLSSRPIVVDGKSEIKLVIGETNETYPQVSFDGQMNIACAPGDIIRITKKPFKIRLIHPTDHNFYATCRDKLGWASEIAAS.

Aspartate 72 (proton acceptor) is an active-site residue. NAD(+) contacts are provided by residues 72–73 (DG), 146–147 (ND), arginine 157, arginine 174, aspartate 176, 187–192 (TAYSLS), and glutamine 247.

This sequence belongs to the NAD kinase family. Requires a divalent metal cation as cofactor.

Its subcellular location is the cytoplasm. It catalyses the reaction NAD(+) + ATP = ADP + NADP(+) + H(+). Involved in the regulation of the intracellular balance of NAD and NADP, and is a key enzyme in the biosynthesis of NADP. Catalyzes specifically the phosphorylation on 2'-hydroxyl of the adenosine moiety of NAD to yield NADP. The sequence is that of NAD kinase from Marinobacter nauticus (strain ATCC 700491 / DSM 11845 / VT8) (Marinobacter aquaeolei).